Reading from the N-terminus, the 301-residue chain is Glycine--tRNA ligase alpha subunit (301 aa).

This sequence belongs to the class-II aminoacyl-tRNA synthetase family. Tetramer of two alpha and two beta subunits.

The protein localises to the cytoplasm. It carries out the reaction tRNA(Gly) + glycine + ATP = glycyl-tRNA(Gly) + AMP + diphosphate. The protein is Glycine--tRNA ligase alpha subunit of Alteromonas mediterranea (strain DSM 17117 / CIP 110805 / LMG 28347 / Deep ecotype).